The primary structure comprises 252 residues: C4b-binding protein beta chain (252 aa).

Positions 1-17 are cleaved as a signal peptide; the sequence is MFFWCACCLMVAWRVSA. Sushi domains follow at residues 21 to 78, 79 to 136, and 137 to 193; these read EHCP…ECRL, GHCP…ICKS, and RDCD…VCKL. Disulfide bonds link cysteine 23/cysteine 63, cysteine 49/cysteine 76, cysteine 81/cysteine 121, cysteine 107/cysteine 134, cysteine 139/cysteine 179, and cysteine 165/cysteine 191. Asparagine 64, asparagine 71, asparagine 98, asparagine 117, and asparagine 154 each carry an N-linked (GlcNAc...) asparagine glycan.

In terms of assembly, disulfide-linked complex of alpha and beta chains of 3 possible sorts: a 570 kDa complex of 7 alpha chains and 1 beta chain, a 530 kDa homoheptamer of alpha chains or a 500 kDa complex of 6 alpha chains and 1 beta chain. The central body of the alpha chain homomer supports tentacles, each with the binding site for C4b at the end.

Its subcellular location is the secreted. Its function is as follows. Controls the classical pathway of complement activation. It binds as a cofactor to C3b/C4b inactivator (C3bINA), which then hydrolyzes the complement fragment C4b. It also accelerates the degradation of the C4bC2a complex (C3 convertase) by dissociating the complement fragment C2a. It also interacts with anticoagulant protein S and with serum amyloid P component. The beta chain binds protein S. The polypeptide is C4b-binding protein beta chain (C4BPB) (Homo sapiens (Human)).